Consider the following 307-residue polypeptide: N-acetylmuramic acid 6-phosphate etherase (307 aa).

An SIS domain is found at Val62–Lys225. The active-site Proton donor is Glu90. The active site involves Glu121.

Belongs to the GCKR-like family. MurNAc-6-P etherase subfamily. In terms of assembly, homodimer.

It catalyses the reaction N-acetyl-D-muramate 6-phosphate + H2O = N-acetyl-D-glucosamine 6-phosphate + (R)-lactate. It participates in amino-sugar metabolism; 1,6-anhydro-N-acetylmuramate degradation. The protein operates within amino-sugar metabolism; N-acetylmuramate degradation. It functions in the pathway cell wall biogenesis; peptidoglycan recycling. Specifically catalyzes the cleavage of the D-lactyl ether substituent of MurNAc 6-phosphate, producing GlcNAc 6-phosphate and D-lactate. Together with AnmK, is also required for the utilization of anhydro-N-acetylmuramic acid (anhMurNAc) either imported from the medium or derived from its own cell wall murein, and thus plays a role in cell wall recycling. The protein is N-acetylmuramic acid 6-phosphate etherase of Brucella anthropi (strain ATCC 49188 / DSM 6882 / CCUG 24695 / JCM 21032 / LMG 3331 / NBRC 15819 / NCTC 12168 / Alc 37) (Ochrobactrum anthropi).